A 967-amino-acid polypeptide reads, in one-letter code: Regulator of G-protein signaling 3 (967 aa).

Residues Gln-18–Val-95 enclose the PDZ domain. Residues Thr-115–Thr-135 form a disordered region. The residue at position 167 (Arg-167) is an Omega-N-methylarginine. The segment at Gln-389 to Asn-705 is disordered. Polar residues-rich tracts occupy residues Leu-476–Gln-486, Ser-512–Pro-549, and Ser-577–Leu-597. A compositionally biased stretch (acidic residues) spans Gly-650 to Asn-676. Over residues Tyr-677–Ser-687 the composition is skewed to basic and acidic residues. Residues Ser-713, Ser-716, Ser-748, and Ser-777 each carry the phosphoserine modification. A disordered region spans residues Phe-807–Lys-830. A compositionally biased stretch (basic and acidic residues) spans Lys-821–Lys-830. The 126-residue stretch at Ser-842 to Leu-967 folds into the RGS domain.

Binds EFNB1 and EFNB2. Binds the GNB1-GNG2 heterodimer. Binds ESR1. Post-translationally, phosphorylated by cyclic GMP-dependent protein kinase. ISGylated. Detected in kidney, uterus, ovary, heart, brain, spleen, lung and testis.

Its subcellular location is the cytoplasm. It localises to the membrane. The protein resides in the nucleus. In terms of biological role, down-regulates signaling from heterotrimeric G-proteins by increasing the GTPase activity of the alpha subunits, thereby driving them into their inactive GDP-bound form. Down-regulates G-protein-mediated release of inositol phosphates and activation of MAP kinases. In Rattus norvegicus (Rat), this protein is Regulator of G-protein signaling 3 (Rgs3).